Consider the following 227-residue polypeptide: Nitrobenzene nitroreductase (227 aa).

14–18 (RRAKR) lines the FMN pocket. The NADP(+) site is built by serine 44 and isoleucine 109. Residues 172–173 (VF) and lysine 215 contribute to the FMN site.

This sequence belongs to the nitroreductase family. Monomer. It depends on FMN as a cofactor.

The catalysed reaction is N-phenylhydroxylamine + 2 NADP(+) + H2O = nitrobenzene + 2 NADPH + 2 H(+). It functions in the pathway xenobiotic degradation; nitrobenzene degradation. With respect to regulation, inhibited by dicumarol, p-hydroxymercuribenzoate and salicyl hydroxamate. Involved in the biodegradation of nitroaromatic compounds. Catalyzes the two-electron reduction of nitrobenzene (NB) to produce a nitrosobenzene (NOB) intermediate, which is immediately reduced to hydroxylaminobenzene (HAB) by a second two-electron transfer. Also active on menadione and nitrofurazone. Replacing NADPH with NADH results in a 4-fold decrease in the reaction rate. This chain is Nitrobenzene nitroreductase, found in Ectopseudomonas oleovorans (Pseudomonas oleovorans).